A 72-amino-acid chain; its full sequence is Translation initiation factor IF-1 2 (72 aa).

The S1-like domain occupies 1–72 (MAKEELIEFE…TKGRINYRHK (72 aa)).

The protein belongs to the IF-1 family. Component of the 30S ribosomal translation pre-initiation complex which assembles on the 30S ribosome in the order IF-2 and IF-3, IF-1 and N-formylmethionyl-tRNA(fMet); mRNA recruitment can occur at any time during PIC assembly.

Its subcellular location is the cytoplasm. Functionally, one of the essential components for the initiation of protein synthesis. Stabilizes the binding of IF-2 and IF-3 on the 30S subunit to which N-formylmethionyl-tRNA(fMet) subsequently binds. Helps modulate mRNA selection, yielding the 30S pre-initiation complex (PIC). Upon addition of the 50S ribosomal subunit IF-1, IF-2 and IF-3 are released leaving the mature 70S translation initiation complex. This is Translation initiation factor IF-1 2 from Ralstonia nicotianae (strain ATCC BAA-1114 / GMI1000) (Ralstonia solanacearum).